A 278-amino-acid polypeptide reads, in one-letter code: Large ribosomal subunit protein uL2 (278 aa).

Disordered stretches follow at residues 1–20 and 225–278; these read MGIR…SVSD and VMNP…GKKR. Residues 258-278 show a composition bias toward basic residues; it reads RNKKKASSRLIVRRRKSGKKR.

This sequence belongs to the universal ribosomal protein uL2 family. As to quaternary structure, part of the 50S ribosomal subunit. Forms a bridge to the 30S subunit in the 70S ribosome.

One of the primary rRNA binding proteins. Required for association of the 30S and 50S subunits to form the 70S ribosome, for tRNA binding and peptide bond formation. It has been suggested to have peptidyltransferase activity; this is somewhat controversial. Makes several contacts with the 16S rRNA in the 70S ribosome. In Cutibacterium acnes (strain DSM 16379 / KPA171202) (Propionibacterium acnes), this protein is Large ribosomal subunit protein uL2.